Consider the following 417-residue polypeptide: E3 ubiquitin-protein ligase RNF135 (417 aa).

The RING-type zinc finger occupies C21 to R67. Disordered regions lie at residues E95–K118 and T143–S173. Coiled coils occupy residues T121–R145 and S180–V204. The span at T143–S164 shows a compositional bias: polar residues. The 193-residue stretch at P225–T417 folds into the B30.2/SPRY domain.

In terms of assembly, homodimer. Interacts (homodimer) with RIGI (double-stranded RNA-bound oligomeric form); involved in both RIGI ubiquitination, oligomerization into filaments associated with viral RNAs and the bridging of these filaments. Interacts with UBE2D3 and UBE2N; E2 ubiquitin ligases involved in RNF135-mediated ubiquitination of RIGI and activation of the RIG-I signaling pathway. Interacts with PCBP2. As to expression, ubiquitously expressed.

It is found in the cytoplasm. The protein resides in the stress granule. It catalyses the reaction S-ubiquitinyl-[E2 ubiquitin-conjugating enzyme]-L-cysteine + [acceptor protein]-L-lysine = [E2 ubiquitin-conjugating enzyme]-L-cysteine + N(6)-ubiquitinyl-[acceptor protein]-L-lysine.. The protein operates within protein modification; protein ubiquitination. Functionally, E2-dependent E3 ubiquitin-protein ligase that functions as a RIGI coreceptor in the sensing of viral RNAs in cell cytoplasm and the activation of the antiviral innate immune response. Together with the UBE2D3, UBE2N and UB2V1 E2 ligases, catalyzes the 'Lys-63'-linked polyubiquitination of RIGI oligomerized on viral RNAs, an essential step in the activation of the RIG-I signaling pathway. Through a ubiquitin-independent parallel mechanism, which consists in bridging RIGI filaments forming on longer viral RNAs, further activates the RIG-I signaling pathway. This second mechanism that synergizes with the ubiquitin-dependent one would thereby allow an RNA length-dependent regulation of the RIG-I signaling pathway. Associated with the E2 ligase UBE2N, also constitutively synthesizes unanchored 'Lys-63'-linked polyubiquitin chains that may also activate the RIG-I signaling pathway. It is not involved in the innate immune response against DNA viruses. The sequence is that of E3 ubiquitin-protein ligase RNF135 from Mus musculus (Mouse).